Here is a 401-residue protein sequence, read N- to C-terminus: (1R,4R,5S)-(-)-guaia-6,10(14)-diene synthase (401 aa).

Residues D134 and E139 each contribute to the Mg(2+) site. Residues 134-138 carry the DDXXD motif motif; sequence DDQFD. R242 lines the substrate pocket. Positions 288 and 292 each coordinate Mg(2+). Substrate is bound at residue K295. Mg(2+) is bound at residue D296. A substrate-binding site is contributed by 375 to 376; that stretch reads RY.

The protein belongs to the terpene synthase family. It depends on Mg(2+) as a cofactor.

It carries out the reaction (2E,6E)-farnesyl diphosphate = (1R,4R,5S)-(-)-guaia-6,10(14)-diene + diphosphate. The protein operates within secondary metabolite biosynthesis; terpenoid biosynthesis. Functionally, catalyzes the conversion of (2E,6E)-farnesyl diphosphate (FPP) to yield the bicyclic sesquiterpene guaia-6,10(14)-diene via a 1,10-cyclization, which requires the abstraction of the pyrophosphate from FPP to yield the (E,E)-germacradienyl cation. The only accepted substrate is farnesyl diphosphate (FPP). The protein is (1R,4R,5S)-(-)-guaia-6,10(14)-diene synthase of Fusarium mangiferae (Mango malformation disease fungus).